The sequence spans 405 residues: MEAEEPPEARRRCPEALGKASGCCPEAPGKARGCCPEALGKLLPGLCFLCCLVTYALVGAALFSAVEGRPDPEAEENPELKKFLDKLCNILKCNLTVVEGSRKDLCEHLQQLKPQWFKAPEDWSFLSALFFCCTVFSTVGYGHMYPVTRLGKFLCMLYALFGIPLMFLVLTDIGDILAAILSRAYSRFQALLCLPRDISKWRPLLLCRKQTDSKPADEAIPQIVIDAGADELLDPQPSREPASPSCNVELFERLVAREKQNELQPPMRPVERSNSCPELVLGRLSCSILSNLDEVGQQVERLDIPLPVIALVIFAYISCAAAILPFWETDLGFEDAFYFCFVTLTTIGFGDIVLVHPHFFLFFSIYIIVGMEILFIAFKLMQNRLLHTYKTLMLFVCQREVSLPC.

The helical transmembrane segment at leucine 43–phenylalanine 63 threads the bilayer. A glycan (N-linked (GlcNAc...) asparagine) is linked at asparagine 94. An intramembrane region (pore-forming) is located at residues phenylalanine 125 to glycine 151. Residues threonine 138, valine 139, glycine 140, and tyrosine 141 each contribute to the K(+) site. Residues threonine 138–histidine 143 form a selectivity filter 1 region. Residues phenylalanine 153–isoleucine 173 form a helical membrane-spanning segment. The segment at proline 221–aspartate 226 is interaction with calcineurin. Residues arginine 272–proline 277 are interaction with YWHAH. Residues serine 275 and serine 287 each carry the phosphoserine modification. The chain crosses the membrane as a helical span at residues isoleucine 304–leucine 324. The pore-forming intramembrane region spans phenylalanine 337 to aspartate 351. Residues threonine 346–aspartate 351 form a selectivity filter 2 region. The chain crosses the membrane as a helical span at residues histidine 358–phenylalanine 378.

This sequence belongs to the two pore domain potassium channel (TC 1.A.1.8) family. Homodimer. Heterodimer with KCNK2. Heterodimer with KCNK10. Interacts with calcineurin. Interacts with YWHAH, in a phosphorylation-dependent manner. Post-translationally, phosphorylation of Ser-275 is required for the binding of 14-3-3eta/YWHAH. Calcineurin-mediated dephosphorylation of Ser-287 enhances channel activity. In terms of processing, N-glycosylated.

The protein localises to the cell membrane. The enzyme catalyses K(+)(in) = K(+)(out). Activated by volatile anesthetics, such as isoflurane and inhibited by local anesthetics such as bupivacaine and lidocaine. Inhibited by extracellular acidic pH. Inhibited by Zn(2+) ions. In terms of biological role, k(+) channel that conducts outward and inward rectifying currents at depolarized and hyperpolarized membrane potentials, respectively. The outward rectifying currents are voltage-dependent, coupled to K(+) electrochemical gradient across the membrane, whereas the inward currents can be induced in response to activation of Ca(2+)-mobilizing receptors. Homo- and heterodimerizes to form functional channels with distinct regulatory and gating properties. In trigeminal ganglia sensory neurons, the heterodimers of KCNK18/TRESK and KCNK2/TREK-1 or KCNK10/TREK-2 inhibit neuronal firing and neurogenic inflammation by stabilizing the resting membrane potential at K(+) equilibrium potential as well as by regulating the threshold of action potentials and the spike frequency. In thymocytes, conducts K(+) currents upon T cell receptor (TCR) signaling leading to sustained Ca(2+) influx and NF-kappa-B activation, FOXP3 transcription and positive selection of regulatory T cell (Treg) progenitor subsets. Appears to mediate the analgesics effects of hydroxy-alpha-sanshool, a metabolite naturally present in Schezuan pepper and other Xanthoxylum plants. In Rattus norvegicus (Rat), this protein is Potassium channel subfamily K member 18 (Kcnk18).